A 181-amino-acid chain; its full sequence is NADH-quinone oxidoreductase subunit I (181 aa).

4Fe-4S ferredoxin-type domains lie at 52–81 (TRDS…LKKG) and 91–120 (KFFR…LTPD). Cysteine 61, cysteine 64, cysteine 67, cysteine 71, cysteine 100, cysteine 103, cysteine 106, and cysteine 110 together coordinate [4Fe-4S] cluster.

Belongs to the complex I 23 kDa subunit family. NDH-1 is composed of 13 different subunits. Subunits NuoA, H, J, K, L, M, N constitute the membrane sector of the complex. The cofactor is [4Fe-4S] cluster.

The protein localises to the cell inner membrane. The catalysed reaction is a quinone + NADH + 5 H(+)(in) = a quinol + NAD(+) + 4 H(+)(out). In terms of biological role, NDH-1 shuttles electrons from NADH, via FMN and iron-sulfur (Fe-S) centers, to quinones in the respiratory chain. The immediate electron acceptor for the enzyme in this species is believed to be ubiquinone. Couples the redox reaction to proton translocation (for every two electrons transferred, four hydrogen ions are translocated across the cytoplasmic membrane), and thus conserves the redox energy in a proton gradient. In Blochmanniella pennsylvanica (strain BPEN), this protein is NADH-quinone oxidoreductase subunit I.